Here is a 199-residue protein sequence, read N- to C-terminus: UPF0301 protein Daci_1578 (199 aa).

The protein belongs to the UPF0301 (AlgH) family.

In Delftia acidovorans (strain DSM 14801 / SPH-1), this protein is UPF0301 protein Daci_1578.